A 604-amino-acid chain; its full sequence is Terpenoid synthase 30 (604 aa).

Residues asparagine 356, aspartate 360, asparagine 500, threonine 504, and glutamate 508 each coordinate Mg(2+). Positions 356 to 360 match the DDXXD motif; degenerate motif; it reads NDVCD.

The protein belongs to the terpene synthase family. Tpsa subfamily. It depends on Mg(2+) as a cofactor. Mn(2+) is required as a cofactor.

The protein localises to the cytoplasm. It participates in secondary metabolite biosynthesis; terpenoid biosynthesis. Functionally, involved in terpene biosynthesis in roots. Possesses sesquiterpene (C15) synthase activity and diterpene (C20) synthase activity in vitro. This chain is Terpenoid synthase 30, found in Arabidopsis thaliana (Mouse-ear cress).